The following is a 75-amino-acid chain: UPF0512 protein C (75 aa).

The protein belongs to the UPF0512 family.

The polypeptide is UPF0512 protein C (Dictyostelium discoideum (Social amoeba)).